A 361-amino-acid chain; its full sequence is Tyrosine--tRNA ligase (361 aa).

L-tyrosine-binding residues include Tyr-36, Tyr-162, Gln-166, Asp-169, and Gln-184. The short motif at 236–240 is the 'KMSKS' region element; sequence KMSKS. Lys-239 is an ATP binding site.

It belongs to the class-I aminoacyl-tRNA synthetase family. TyrS type 4 subfamily. In terms of assembly, homodimer.

The protein resides in the cytoplasm. The catalysed reaction is tRNA(Tyr) + L-tyrosine + ATP = L-tyrosyl-tRNA(Tyr) + AMP + diphosphate + H(+). In terms of biological role, catalyzes the attachment of tyrosine to tRNA(Tyr) in a two-step reaction: tyrosine is first activated by ATP to form Tyr-AMP and then transferred to the acceptor end of tRNA(Tyr). In Saccharolobus islandicus (strain M.14.25 / Kamchatka #1) (Sulfolobus islandicus), this protein is Tyrosine--tRNA ligase.